Consider the following 185-residue polypeptide: MGLRHILRIDNPDEKKILTTRCHPVRMPNPSLKQLVADMFETMHAANGVGLAAPQIGVTQRLAVIAIPPMMEERPDGTKVEVAPEQTFVLINPEIVKASDQEDVGLEGCLSLPGWYGEVPRAAWVTVEYTDLNGRRQRIRRATGLLARALQHEIDHLDGVLFTERIRDLSTLKSYSEEEAPATTG.

Residues Cys-109 and His-152 each contribute to the Fe cation site. The active site involves Glu-153. Residue His-156 coordinates Fe cation.

Belongs to the polypeptide deformylase family. It depends on Fe(2+) as a cofactor.

It catalyses the reaction N-terminal N-formyl-L-methionyl-[peptide] + H2O = N-terminal L-methionyl-[peptide] + formate. Functionally, removes the formyl group from the N-terminal Met of newly synthesized proteins. Requires at least a dipeptide for an efficient rate of reaction. N-terminal L-methionine is a prerequisite for activity but the enzyme has broad specificity at other positions. This is Peptide deformylase from Roseiflexus castenholzii (strain DSM 13941 / HLO8).